The following is a 197-amino-acid chain: Xanthine phosphoribosyltransferase (197 aa).

Xanthine contacts are provided by L20 and N27. A 5-phospho-alpha-D-ribose 1-diphosphate-binding site is contributed by 128–132 (ANGQA). Xanthine is bound at residue K156.

It belongs to the purine/pyrimidine phosphoribosyltransferase family. Xpt subfamily. In terms of assembly, homodimer.

It is found in the cytoplasm. The catalysed reaction is XMP + diphosphate = xanthine + 5-phospho-alpha-D-ribose 1-diphosphate. The protein operates within purine metabolism; XMP biosynthesis via salvage pathway; XMP from xanthine: step 1/1. Its function is as follows. Converts the preformed base xanthine, a product of nucleic acid breakdown, to xanthosine 5'-monophosphate (XMP), so it can be reused for RNA or DNA synthesis. In Bacillus cereus (strain B4264), this protein is Xanthine phosphoribosyltransferase.